We begin with the raw amino-acid sequence, 179 residues long: Probable galaptin lec-7 (179 aa).

The 128-residue stretch at 11-138 (SVYQIEENLK…SVDIESIVFK (128 aa)) folds into the Galectin domain.

The polypeptide is Probable galaptin lec-7 (lec-7) (Caenorhabditis elegans).